The chain runs to 239 residues: Small ribosomal subunit protein uS3c (239 aa).

The 97-residue stretch at 43–139 (IKNYIQKNRK…RFNISIEKVK (97 aa)) folds into the KH type-2 domain. Residues 50–74 (NRKKGSNRKIESDSSSEVITHNRKM) are disordered.

The protein belongs to the universal ribosomal protein uS3 family. In terms of assembly, part of the 30S ribosomal subunit.

It is found in the plastid. The protein localises to the chloroplast. The sequence is that of Small ribosomal subunit protein uS3c (rps3) from Triticum aestivum (Wheat).